Here is a 219-residue protein sequence, read N- to C-terminus: Uracil-DNA glycosylase (219 aa).

Asp-61 serves as the catalytic Proton acceptor.

The protein belongs to the uracil-DNA glycosylase (UDG) superfamily. UNG family.

The protein localises to the cytoplasm. It catalyses the reaction Hydrolyzes single-stranded DNA or mismatched double-stranded DNA and polynucleotides, releasing free uracil.. Functionally, excises uracil residues from the DNA which can arise as a result of misincorporation of dUMP residues by DNA polymerase or due to deamination of cytosine. This Haemophilus influenzae (strain 86-028NP) protein is Uracil-DNA glycosylase.